We begin with the raw amino-acid sequence, 378 residues long: Opsin Rh4 (378 aa).

At 1–53 (MEPLCNASEPPLRPEARSSGNGDLQFLGWNVPPDQIQYIPEHWLTQLEPPASM) the chain is on the extracellular side. An N-linked (GlcNAc...) asparagine glycan is attached at Asn6. The chain crosses the membrane as a helical span at residues 54 to 78 (HYMLGVFYIFLFCASTVGNGMVIWI). Over 79–90 (FSTSKSLRTPSN) the chain is Cytoplasmic. Residues 91–111 (MFVLNLAVFDLIMCLKAPIFI) traverse the membrane as a helical segment. The Extracellular segment spans residues 112–127 (YNSFHRGFALGNTWCQ). A disulfide bridge links Cys126 with Cys203. Residues 128-148 (IFASIGSYSGIGAGMTNAAIG) traverse the membrane as a helical segment. The Cytoplasmic segment spans residues 149 to 167 (YDRYNVITKPMNRNMTFTK). Residues 168–192 (AVIMNIIIWLYCTPWVVLPLTQFWD) form a helical membrane-spanning segment. The Extracellular portion of the chain corresponds to 193-216 (RFVPEGYLTSCSFDYLSDNFDTRL). Residues 217–244 (FVGTIFFFSFVCPTLMILYYYSQIVGHV) form a helical membrane-spanning segment. Residues 245 to 280 (FSHEKALREQAKKMNVESLRSNVDKSKETAEIRIAK) are Cytoplasmic-facing. A helical transmembrane segment spans residues 281 to 304 (AAITICFLFFVSWTPYGVMSLIGA). At 305–312 (FGDKSLLT) the chain is on the extracellular side. Residues 313–337 (PGATMIPACTCKLVACIDPFVYAIS) form a helical membrane-spanning segment. Lys324 carries the N6-(retinylidene)lysine modification. At 338–378 (HPRYRLELQKRCPWLGVNEKSGEISSAQSTTTQEQQQTTAA) the chain is on the cytoplasmic side.

The protein belongs to the G-protein coupled receptor 1 family. Opsin subfamily. Phosphorylated on some or all of the serine and threonine residues present in the C-terminal region.

It is found in the membrane. Functionally, visual pigments are the light-absorbing molecules that mediate vision. They consist of an apoprotein, opsin, covalently linked to cis-retinal. The protein is Opsin Rh4 (Rh4) of Drosophila melanogaster (Fruit fly).